The primary structure comprises 166 residues: Photosystem I assembly protein Ycf3 (166 aa).

TPR repeat units follow at residues 35-68 (AFTYYRNGMSAQSEGEYAEALQNYYQALRYEIDA), 72-105 (SYMLYNIGLIHSSNGQQSKALEYYYQALDRNPRL), and 120-153 (GEQALINNQDEISKIFFDKAADYWKEAIRLSPTS).

The protein belongs to the Ycf3 family.

The protein localises to the plastid. The protein resides in the chloroplast thylakoid membrane. Its function is as follows. Essential for the assembly of the photosystem I (PSI) complex. May act as a chaperone-like factor to guide the assembly of the PSI subunits. The chain is Photosystem I assembly protein Ycf3 from Bigelowiella natans (Pedinomonas minutissima).